A 100-amino-acid polypeptide reads, in one-letter code: Small ribosomal subunit protein uS14c (100 aa).

This sequence belongs to the universal ribosomal protein uS14 family. In terms of assembly, part of the 30S ribosomal subunit.

It localises to the plastid. Functionally, binds 16S rRNA, required for the assembly of 30S particles. The protein is Small ribosomal subunit protein uS14c of Epifagus virginiana (Beechdrops).